The primary structure comprises 38 residues: Large ribosomal subunit protein bL36 (38 aa).

The protein belongs to the bacterial ribosomal protein bL36 family.

This is Large ribosomal subunit protein bL36 from Cellvibrio japonicus (strain Ueda107) (Pseudomonas fluorescens subsp. cellulosa).